Here is a 205-residue protein sequence, read N- to C-terminus: ATP-dependent Clp protease proteolytic subunit (205 aa).

The active-site Nucleophile is Ser98. His123 is an active-site residue.

This sequence belongs to the peptidase S14 family. As to quaternary structure, fourteen ClpP subunits assemble into 2 heptameric rings which stack back to back to give a disk-like structure with a central cavity, resembling the structure of eukaryotic proteasomes.

The protein localises to the cytoplasm. The catalysed reaction is Hydrolysis of proteins to small peptides in the presence of ATP and magnesium. alpha-casein is the usual test substrate. In the absence of ATP, only oligopeptides shorter than five residues are hydrolyzed (such as succinyl-Leu-Tyr-|-NHMec, and Leu-Tyr-Leu-|-Tyr-Trp, in which cleavage of the -Tyr-|-Leu- and -Tyr-|-Trp bonds also occurs).. Its function is as follows. Cleaves peptides in various proteins in a process that requires ATP hydrolysis. Has a chymotrypsin-like activity. Plays a major role in the degradation of misfolded proteins. The protein is ATP-dependent Clp protease proteolytic subunit of Desulfosudis oleivorans (strain DSM 6200 / JCM 39069 / Hxd3) (Desulfococcus oleovorans).